The chain runs to 143 residues: Heat shock protein 16 (143 aa).

The sHSP domain occupies 30–143 (QIPGELSPSI…SQTKKQIAIK (114 aa)).

Belongs to the small heat shock protein (HSP20) family.

Its subcellular location is the cytoplasm. It is found in the nucleus. This chain is Heat shock protein 16 (hsp16), found in Schizosaccharomyces pombe (strain 972 / ATCC 24843) (Fission yeast).